The sequence spans 316 residues: Protoheme IX farnesyltransferase (316 aa).

9 helical membrane passes run 32-52 (VMSL…GHIH), 53-73 (PVLG…SGAL), 93-113 (IPAG…LSGF), 116-136 (VILG…TIFF), 152-172 (NIVI…ACVT), 180-200 (TVLF…LALF), 221-241 (VTKH…VLPS), 252-271 (LVAA…VWRM), and 289-309 (IFYL…PVLV).

Belongs to the UbiA prenyltransferase family. Protoheme IX farnesyltransferase subfamily.

It is found in the cell inner membrane. It catalyses the reaction heme b + (2E,6E)-farnesyl diphosphate + H2O = Fe(II)-heme o + diphosphate. The protein operates within porphyrin-containing compound metabolism; heme O biosynthesis; heme O from protoheme: step 1/1. Functionally, converts heme B (protoheme IX) to heme O by substitution of the vinyl group on carbon 2 of heme B porphyrin ring with a hydroxyethyl farnesyl side group. This chain is Protoheme IX farnesyltransferase, found in Rhizobium johnstonii (strain DSM 114642 / LMG 32736 / 3841) (Rhizobium leguminosarum bv. viciae).